Consider the following 616-residue polypeptide: Dihydroxy-acid dehydratase (616 aa).

Asp81 serves as a coordination point for Mg(2+). Cys122 contacts [2Fe-2S] cluster. 2 residues coordinate Mg(2+): Asp123 and Lys124. Residue Lys124 is modified to N6-carboxylysine. Position 195 (Cys195) interacts with [2Fe-2S] cluster. Glu491 provides a ligand contact to Mg(2+). The active-site Proton acceptor is the Ser517.

Belongs to the IlvD/Edd family. Homodimer. Requires [2Fe-2S] cluster as cofactor. It depends on Mg(2+) as a cofactor.

It carries out the reaction (2R)-2,3-dihydroxy-3-methylbutanoate = 3-methyl-2-oxobutanoate + H2O. The enzyme catalyses (2R,3R)-2,3-dihydroxy-3-methylpentanoate = (S)-3-methyl-2-oxopentanoate + H2O. The protein operates within amino-acid biosynthesis; L-isoleucine biosynthesis; L-isoleucine from 2-oxobutanoate: step 3/4. It participates in amino-acid biosynthesis; L-valine biosynthesis; L-valine from pyruvate: step 3/4. Functions in the biosynthesis of branched-chain amino acids. Catalyzes the dehydration of (2R,3R)-2,3-dihydroxy-3-methylpentanoate (2,3-dihydroxy-3-methylvalerate) into 2-oxo-3-methylpentanoate (2-oxo-3-methylvalerate) and of (2R)-2,3-dihydroxy-3-methylbutanoate (2,3-dihydroxyisovalerate) into 2-oxo-3-methylbutanoate (2-oxoisovalerate), the penultimate precursor to L-isoleucine and L-valine, respectively. In Shigella flexneri, this protein is Dihydroxy-acid dehydratase.